A 289-amino-acid polypeptide reads, in one-letter code: MSKRVILFLLTNLAITFVLGIVLNIIFQVTGIKGTSTTGILMMSLLFGFTGSLISLFMSKSMALRSVGAEVIQQPRNQAEQWLFNTVQRQSQKAGIPMPDIAIYHSADVNAFATGATKNNSLVAVSTGLLDNMTEDEAEAVVAHEIAHIANGDMVTMTLLQGVLNTFVIFLSRMISTAVSGSRDENGNSTQNTLVFWVVDIALQMIFGILATMIAMWFSRYREYRADMGSAQLVGKEKMIAALERLRHVHEPQEMQGSLSAFMINGIRSKELFMSHPPLEKRIEALRNL.

A run of 2 helical transmembrane segments spans residues 6–26 (ILFL…LNII) and 38–58 (TGIL…SLFM). Histidine 144 provides a ligand contact to Zn(2+). Glutamate 145 is a catalytic residue. Histidine 148 serves as a coordination point for Zn(2+). The next 2 helical transmembrane spans lie at 152–172 (GDMV…IFLS) and 194–214 (LVFW…ATMI). Position 223 (glutamate 223) interacts with Zn(2+).

Belongs to the peptidase M48B family. The cofactor is Zn(2+).

It localises to the cell inner membrane. The protein is Protease HtpX of Haemophilus ducreyi (strain 35000HP / ATCC 700724).